The primary structure comprises 342 residues: dTDP-3,4-didehydro-2,6-dideoxy-alpha-D-glucose 3-reductase (342 aa).

Cysteine 19–arginine 25 provides a ligand contact to NADP(+). Arginine 26 lines the substrate pocket. Residues serine 44–arginine 45, tyrosine 65, leucine 81, and histidine 86 contribute to the NADP(+) site. The Proton donor role is filled by lysine 104. NADP(+) contacts are provided by arginine 172 and aspartate 184. The substrate site is built by tyrosine 243 and serine 263.

This sequence belongs to the Gfo/Idh/MocA family.

It catalyses the reaction dTDP-4-dehydro-2,6-dideoxy-alpha-D-glucose + NADP(+) = dTDP-3,4-didehydro-2,6-dideoxy-alpha-D-glucose + NADPH + H(+). Its pathway is antibiotic biosynthesis; granaticin biosynthesis. Involved in the biosynthesis of the 2,6-deoxysugar, dTDP-L-rhodinose, attached to the benzoisochromane quinone chromophore to produce the aglycone antibiotics granaticin and granaticin B. Catalyzes the reduction of the C-3 keto moiety of dTDP-3,4-diketo-2,6-dideoxy-alpha-D-glucose to yield dTDP-4-keto-2,6-dideoxy-alpha-D-glucose. NADPH is the better reductant, however NADH can also be used. The polypeptide is dTDP-3,4-didehydro-2,6-dideoxy-alpha-D-glucose 3-reductase (Streptomyces violaceoruber).